The following is a 150-amino-acid chain: Transcriptional repressor NrdR (150 aa).

The segment at 3–34 (CPFCNASDTKVVDTRASEDDKIVRRRRECISC) is a zinc-finger region. The ATP-cone domain occupies 49–139 (LTVVKKDKNR…VYREFTDVKS (91 aa)).

It belongs to the NrdR family. The cofactor is Zn(2+).

In terms of biological role, negatively regulates transcription of bacterial ribonucleotide reductase nrd genes and operons by binding to NrdR-boxes. This chain is Transcriptional repressor NrdR, found in Finegoldia magna (strain ATCC 29328 / DSM 20472 / WAL 2508) (Peptostreptococcus magnus).